We begin with the raw amino-acid sequence, 469 residues long: Adenosylhomocysteinase (469 aa).

3 residues coordinate substrate: T63, D139, and E164. 165-167 (TTT) is an NAD(+) binding site. Substrate is bound by residues K194 and D198. Residues N199, 228-233 (GYGDVG), E251, N300, 321-323 (IGH), and N375 contribute to the NAD(+) site.

This sequence belongs to the adenosylhomocysteinase family. It depends on NAD(+) as a cofactor.

It localises to the cytoplasm. It catalyses the reaction S-adenosyl-L-homocysteine + H2O = L-homocysteine + adenosine. It participates in amino-acid biosynthesis; L-homocysteine biosynthesis; L-homocysteine from S-adenosyl-L-homocysteine: step 1/1. In terms of biological role, may play a key role in the regulation of the intracellular concentration of adenosylhomocysteine. This chain is Adenosylhomocysteinase, found in Ectopseudomonas mendocina (strain ymp) (Pseudomonas mendocina).